Consider the following 372-residue polypeptide: NAD(P)H-quinone oxidoreductase subunit 1 (372 aa).

Transmembrane regions (helical) follow at residues 27–47, 97–117, 128–148, 176–196, 204–224, 266–286, 308–328, and 347–367; these read IIWL…GVLV, ILFT…WLIV, VGIG…GLLM, LALS…IDIV, ILSW…ICAL, ILSA…PIPV, SIGI…AILL, and FLLP…LAFP.

The protein belongs to the complex I subunit 1 family. NDH-1 is composed of at least 11 different subunits.

It localises to the cellular thylakoid membrane. The catalysed reaction is a plastoquinone + NADH + (n+1) H(+)(in) = a plastoquinol + NAD(+) + n H(+)(out). It carries out the reaction a plastoquinone + NADPH + (n+1) H(+)(in) = a plastoquinol + NADP(+) + n H(+)(out). In terms of biological role, NDH-1 shuttles electrons from an unknown electron donor, via FMN and iron-sulfur (Fe-S) centers, to quinones in the respiratory and/or the photosynthetic chain. The immediate electron acceptor for the enzyme in this species is believed to be plastoquinone. Couples the redox reaction to proton translocation, and thus conserves the redox energy in a proton gradient. This chain is NAD(P)H-quinone oxidoreductase subunit 1, found in Prochlorococcus marinus (strain MIT 9301).